A 579-amino-acid chain; its full sequence is Folliculin (579 aa).

The disordered stretch occupies residues 32 to 52 (GASCGDSIGQGEQAEDEEMGI). Residues 86–242 (RSLAAGHPGY…RNGNAARSLT (157 aa)) form the uDENN FLCN/SMCR8-type domain. Residues 337–491 (NMVQRRMGVF…ILNKIEAALS (155 aa)) enclose the cDENN FLCN/SMCR8-type domain. A dDENN FLCN/SMCR8-type domain is found at 493–558 (ENLSMDVVDQ…LLKFWMTGLS (66 aa)).

Belongs to the folliculin family. Component of the lysosomal folliculin complex (LFC).

It is found in the lysosome membrane. The protein resides in the cytoplasm. The protein localises to the cytosol. It localises to the cell projection. Its subcellular location is the cilium. It is found in the cytoskeleton. The protein resides in the microtubule organizing center. The protein localises to the centrosome. It localises to the spindle. Its subcellular location is the nucleus. With respect to regulation, GTPase-activating activity is inhibited in the folliculin complex (LFC), which stabilizes the GDP-bound state of RagA/RRAGA (or RagB/RRAGB), because Arg-164 is located far from the RagC/RRAGC or RagD/RRAGD nucleotide pocket. Disassembly of the LFC complex upon amino acid restimulation liberates the GTPase-activating activity. Multi-functional protein, involved in both the cellular response to amino acid availability and in the regulation of glycolysis. GTPase-activating protein that plays a key role in the cellular response to amino acid availability through regulation of the non-canonical mTORC1 signaling cascade controlling the MiT/TFE factors tfeb and tfe3. Activates mTORC1 by acting as a GTPase-activating protein: specifically stimulates GTP hydrolysis by RagC/RRAGC or RagD/RRAGD, promoting the conversion to the GDP-bound state of RagC/RRAGC or RagD/RRAGD, and thereby activating the kinase activity of mTORC1. The GTPase-activating activity is inhibited during starvation and activated in presence of nutrients. Acts as a key component for non-canonical mTORC1-dependent control of the MiT/TFE factors tfeb and tfe3, while it is not involved in mTORC1-dependent phosphorylation of canonical RPS6KB1/S6K1 and EIF4EBP1/4E-BP1. In low-amino acid conditions, the lysosomal folliculin complex (LFC) is formed on the membrane of lysosomes, which inhibits the GTPase-activating activity of flcn, inactivates mTORC1 and maximizes nuclear translocation of tfeb and tfe3. Upon amino acid restimulation, RagA/RRAGA (or RagB/RRAGB) nucleotide exchange promotes disassembly of the LFC complex and liberates the GTPase-activating activity of flcn, leading to activation of mTORC1 and subsequent cytoplasmic retention of tfeb and tfe3. Required for the exit of hematopoietic stem cell from pluripotency by promoting mTOR-dependent cytoplasmic retention of tfe3, thereby increasing Wnt signaling. Acts as an inhibitor of browning of adipose tissue by regulating mTOR-dependent cytoplasmic retention of tfe3. In response to flow stress, regulates STK11/LKB1 accumulation and mTORC1 activation through primary cilia. Required for starvation-induced perinuclear clustering of lysosomes by promoting association of rilp with its effector rab34. Involved in the control of embryonic stem cells differentiation; together with lamtor1 it is necessary to recruit and activate RagC/RRAGC and RagD/RRAGD at the lysosomes, and to induce exit of embryonic stem cells from pluripotency via non-canonical, mTOR-independent tfe3 inactivation. Regulates glycolysis by binding to lactate dehydrogenase ldha, acting as an uncompetitive inhibitor. The protein is Folliculin of Xenopus tropicalis (Western clawed frog).